Reading from the N-terminus, the 447-residue chain is Rab GDP dissociation inhibitor alpha (447 aa).

Phosphoserine is present on S427.

It belongs to the Rab GDI family. Interacts with RHOH. Interacts with the non-phosphorylated forms of RAB1A, RAB3A, RAB5A, RAB5B, RAB5C, RAB8A, RAB8B, RAB10, RAB12, RAB35, and RAB43. Interacts with RAB3A.

It localises to the cytoplasm. The protein resides in the golgi apparatus. The protein localises to the trans-Golgi network. Regulates the GDP/GTP exchange reaction of most Rab proteins by inhibiting the dissociation of GDP from them, and the subsequent binding of GTP to them. Promotes the dissociation of GDP-bound Rab proteins from the membrane and inhibits their activation. Promotes the dissociation of RAB1A, RAB3A, RAB5A and RAB10 from membranes. The sequence is that of Rab GDP dissociation inhibitor alpha (GDI1) from Bos taurus (Bovine).